Here is a 947-residue protein sequence, read N- to C-terminus: Bifunctional glutamine synthetase adenylyltransferase/adenylyl-removing enzyme (947 aa).

Positions 1 to 440 (MTPLSSPLSQ…VFNELIGDDE (440 aa)) are adenylyl removase. Residues 450-947 (SEPWREVWQD…ASWRKWLVAV (498 aa)) are adenylyl transferase.

Belongs to the GlnE family. Requires Mg(2+) as cofactor.

It carries out the reaction [glutamine synthetase]-O(4)-(5'-adenylyl)-L-tyrosine + phosphate = [glutamine synthetase]-L-tyrosine + ADP. It catalyses the reaction [glutamine synthetase]-L-tyrosine + ATP = [glutamine synthetase]-O(4)-(5'-adenylyl)-L-tyrosine + diphosphate. Functionally, involved in the regulation of glutamine synthetase GlnA, a key enzyme in the process to assimilate ammonia. When cellular nitrogen levels are high, the C-terminal adenylyl transferase (AT) inactivates GlnA by covalent transfer of an adenylyl group from ATP to specific tyrosine residue of GlnA, thus reducing its activity. Conversely, when nitrogen levels are low, the N-terminal adenylyl removase (AR) activates GlnA by removing the adenylyl group by phosphorolysis, increasing its activity. The regulatory region of GlnE binds the signal transduction protein PII (GlnB) which indicates the nitrogen status of the cell. The protein is Bifunctional glutamine synthetase adenylyltransferase/adenylyl-removing enzyme of Salmonella paratyphi A (strain ATCC 9150 / SARB42).